Here is a 463-residue protein sequence, read N- to C-terminus: NADH dehydrogenase [ubiquinone] iron-sulfur protein 2, mitochondrial (463 aa).

Residues 1 to 33 (MAALRALRCLRGVGAPVLRPGSGIRLPSQPSRG) constitute a mitochondrion transit peptide. Lys-62 is modified (N6-acetyllysine). Symmetric dimethylarginine is present on Arg-118. 3 residues coordinate [4Fe-4S] cluster: Cys-326, Cys-332, and Cys-347.

It belongs to the complex I 49 kDa subunit family. Core subunit of respiratory chain NADH dehydrogenase (Complex I) which is composed of 45 different subunits. Component of the iron-sulfur (IP) fragment of the enzyme. Interacts with NDUFAF3. Interacts with NDUFAF7. Interacts with CERS2. It depends on [4Fe-4S] cluster as a cofactor. Post-translationally, dimethylation at Arg-118 by NDUFAF7 takes place after NDUFS2 assembles into the complex I, leading to stabilize the early intermediate complex.

It is found in the mitochondrion inner membrane. The enzyme catalyses a ubiquinone + NADH + 5 H(+)(in) = a ubiquinol + NAD(+) + 4 H(+)(out). In terms of biological role, core subunit of the mitochondrial membrane respiratory chain NADH dehydrogenase (Complex I) which catalyzes electron transfer from NADH through the respiratory chain, using ubiquinone as an electron acceptor. Essential for the catalytic activity and assembly of complex I. Redox-sensitive, critical component of the oxygen-sensing pathway in the pulmonary vasculature which plays a key role in acute pulmonary oxygen-sensing and hypoxic pulmonary vasoconstriction. Plays an important role in carotid body sensing of hypoxia. Essential for glia-like neural stem and progenitor cell proliferation, differentiation and subsequent oligodendrocyte or neuronal maturation. The protein is NADH dehydrogenase [ubiquinone] iron-sulfur protein 2, mitochondrial (Ndufs2) of Mus musculus (Mouse).